The primary structure comprises 345 residues: Alanine racemase (345 aa).

K33 serves as the catalytic Proton acceptor; specific for D-alanine. Position 33 is an N6-(pyridoxal phosphate)lysine (K33). R128 is a binding site for substrate. Y242 functions as the Proton acceptor; specific for L-alanine in the catalytic mechanism. M291 serves as a coordination point for substrate.

It belongs to the alanine racemase family. The cofactor is pyridoxal 5'-phosphate.

It catalyses the reaction L-alanine = D-alanine. It functions in the pathway amino-acid biosynthesis; D-alanine biosynthesis; D-alanine from L-alanine: step 1/1. Its function is as follows. Catalyzes the interconversion of L-alanine and D-alanine. May also act on other amino acids. The sequence is that of Alanine racemase (alr) from Ruegeria sp. (strain TM1040) (Silicibacter sp.).